The primary structure comprises 321 residues: Torsin-2A (321 aa).

Residues 1–27 (MAVARHGCPPWGSILGLLVLALAAAAA) form the signal peptide. 93–100 (GWTGTGKS) contacts ATP. An N-linked (GlcNAc...) asparagine glycan is attached at Asn-149.

Belongs to the ClpA/ClpB family. Torsin subfamily. Homohexamer. Interacts with TOR1AIP1.

Its subcellular location is the endoplasmic reticulum lumen. This is Torsin-2A (Tor2a) from Rattus norvegicus (Rat).